Here is a 693-residue protein sequence, read N- to C-terminus: Follicle-stimulating hormone receptor (693 aa).

Positions 1 to 18 are cleaved as a signal peptide; sequence MFLVFTCSLILLASCSSC. 2 disulfide bridges follow: cysteine 18–cysteine 25 and cysteine 23–cysteine 32. The region spanning 19–46 is the LRRNT domain; sequence QHHTCHCAGRIFICQESKVVQLPRDIPT. At 19–366 the chain is on the extracellular side; that stretch reads QHHTCHCAGR…EDIMGYTILR (348 aa). Asparagine 47 carries an N-linked (GlcNAc...) asparagine glycan. LRR repeat units lie at residues 49 to 72, 73 to 97, 98 to 118, 119 to 143, 144 to 169, 170 to 192, 193 to 216, 217 to 240, and 241 to 259; these read TELRFVLTKMRVIPKGAFAGLLDL, EKIEISQNDALEVIEAKVFSNLPKL, HEIRIEKANNLVYIDQDAFQH, LPSLRYLLISNTGLRFLPVVQKVHS, FQKVLLDIQDNINIRTIERNSFMGLS, SESVILWLNKNGIQEIENHAFNG, TYLDELNLSDNQNLEKLPNEVFQG, ANGPVVLDISRTKISFLPGHGLEL, and IKKLRARSTYNLKKLPDLS. Residues asparagine 191 and asparagine 199 are each glycosylated (N-linked (GlcNAc...) asparagine). N-linked (GlcNAc...) asparagine glycosylation is present at asparagine 268. 4 disulfides stabilise this stretch: cysteine 275–cysteine 346, cysteine 276–cysteine 292, cysteine 276–cysteine 356, and cysteine 292–cysteine 338. Residues 367–387 form a helical membrane-spanning segment; it reads VLIWFISILAITGNIVVLIIL. At 388-398 the chain is on the cytoplasmic side; sequence ISSQYKLTVPR. A helical membrane pass occupies residues 399–421; sequence FLMCNLAFADLCIGIYLLFIASV. Residues 422-443 lie on the Extracellular side of the membrane; sequence DIQTKSQYYNYAIDWQTGAGCN. The cysteines at positions 442 and 517 are disulfide-linked. The helical transmembrane segment at 444–465 threads the bilayer; sequence AAGFFTVFASELSVYTLTVITL. Topologically, residues 466 to 485 are cytoplasmic; sequence ERWHTITYAMQLDRKVRFRH. Residues 486-508 form a helical membrane-spanning segment; the sequence is AVIIMIFGWMFAFTVALLPIFGV. Residues 509 to 528 are Extracellular-facing; the sequence is SSYMKVSICLPMDIETPFSQ. The chain crosses the membrane as a helical span at residues 529–550; that stretch reads AYVIFLLVLNVLAFVIICACYI. The Cytoplasmic segment spans residues 551-573; that stretch reads CIYFTVRNPNVISSNSDTKIAKR. Residues 574-597 traverse the membrane as a helical segment; it reads MAILIFTDFLCMAPISFFAISASL. Residues 598-608 lie on the Extracellular side of the membrane; sequence KVPLITVSKSK. A helical membrane pass occupies residues 609 to 630; that stretch reads ILLVLFYPINSCANPFLYAIFT. Over 631 to 693 the chain is Cytoplasmic; the sequence is KTFRRDFFIL…YSLVPLNHLN (63 aa).

Belongs to the G-protein coupled receptor 1 family. FSH/LSH/TSH subfamily. In terms of assembly, homotrimer. Functions as a homotrimer binding the FSH hormone heterodimer composed of CGA and FSHB.

It is found in the cell membrane. Functionally, g protein-coupled receptor for follitropin, the follicle-stimulating hormone. Through cAMP production activates the downstream PI3K-AKT and ERK1/ERK2 signaling pathways. This is Follicle-stimulating hormone receptor (FSHR) from Cairina moschata (Muscovy duck).